A 182-amino-acid chain; its full sequence is UPF0397 protein SPH_0594 (182 aa).

The next 5 helical transmembrane spans lie at 10–30 (VVAV…NIPT), 46–66 (LLSI…GHAI), 73–93 (YGLW…VGLF), 109–129 (ILIF…VLAP), and 148–168 (IVAG…LLLA).

It belongs to the UPF0397 family.

It localises to the cell membrane. The sequence is that of UPF0397 protein SPH_0594 from Streptococcus pneumoniae (strain Hungary19A-6).